We begin with the raw amino-acid sequence, 558 residues long: Putative cation/proton antiporter YbaL (558 aa).

Topologically, residues 1 to 3 (MHH) are periplasmic. Residues 4-24 (ATPLITTIVGGLVLAFILGML) traverse the membrane as a helical segment. At 25–31 (ANKLRIS) the chain is on the cytoplasmic side. Residues 32 to 52 (PLVGYLLAGVLAGPFTPGFVA) traverse the membrane as a helical segment. At 53 to 55 (DTK) the chain is on the periplasmic side. The chain crosses the membrane as a helical span at residues 56 to 76 (LAPELAELGVILLMFGVGLHF). The Cytoplasmic portion of the chain corresponds to 77-85 (SLKDLMAVK). Residues 86 to 106 (AIAIPGAIAQIAVATLLGMAL) traverse the membrane as a helical segment. Topologically, residues 107–112 (SAVLGW) are periplasmic. The helical transmembrane segment at 113–133 (SLMTGIVFGLCLSTASTVVLL) threads the bilayer. The Cytoplasmic portion of the chain corresponds to 134-148 (RALEERQLIDSQRGQ). Residues 149–169 (IAIGWLIVEDLVMVLTLVLLP) form a helical membrane-spanning segment. Topologically, residues 170 to 185 (AVAGMMEQGDVGFATL) are periplasmic. The chain crosses the membrane as a helical span at residues 186-206 (AVDMGITIGKVIAFIAIMMLV). Residues 207-225 (GRRLVPWIMARSAATGSRE) lie on the Cytoplasmic side of the membrane. A helical transmembrane segment spans residues 226–246 (LFTLSVLALALGVAFGAVELF). Position 247 (Asp-247) is a topological domain, periplasmic. The chain crosses the membrane as a helical span at residues 248–268 (VSFALGAFFAGMVLNESELSH). The Cytoplasmic segment spans residues 269–279 (RAAHDTLPLRD). A helical transmembrane segment spans residues 280 to 300 (AFAVLFFVSVGMLFDPLILIQ). Residues 301–303 (QPL) lie on the Periplasmic side of the membrane. The chain crosses the membrane as a helical span at residues 304-324 (AVLATLAIILFGKSLAAFFLV). Topologically, residues 325 to 336 (RLFGHSQRTALT) are cytoplasmic. Residues 337–357 (IAASLAQIGEFAFILAGLGMA) traverse the membrane as a helical segment. Over 358-367 (LNLLPQAGQN) the chain is Periplasmic. Residues 368–388 (LVLAGAILSIMLNPVLFALLE) traverse the membrane as a helical segment. At 389–558 (KYLAKTETLE…TPPAGEVVTG (170 aa)) the chain is on the cytoplasmic side. An RCK N-terminal domain is found at 417 to 534 (CNHALLVGYG…TERGANQVVM (118 aa)). AMP contacts are provided by residues 427–428 (RV), 447–448 (ET), 467–468 (NA), Glu-494, and Arg-514.

It belongs to the monovalent cation:proton antiporter 2 (CPA2) transporter (TC 2.A.37) family.

The protein resides in the cell inner membrane. The protein is Putative cation/proton antiporter YbaL (ybaL) of Escherichia coli (strain K12).